The chain runs to 123 residues: Pre-B lymphocyte protein 3 (123 aa).

Positions 1-20 are cleaved as a signal peptide; it reads MACRCLSFLLMGTFLSVSQT. An Ig-like domain is found at 21-123; it reads VLAQLDALLV…YCSVGYGFSP (103 aa). Cys-40 and Cys-115 form a disulfide bridge.

It belongs to the immunoglobulin superfamily. As to expression, expressed in B-cell precursors. Expressed in fetal liver, bone marrow, spleen and lymph node.

Its function is as follows. Associates with the Ig-mu chain to form a molecular complex that is expressed on the surface of pre-B-cells. The chain is Pre-B lymphocyte protein 3 (VPREB3) from Homo sapiens (Human).